We begin with the raw amino-acid sequence, 483 residues long: Arginine/agmatine antiporter (483 aa).

12 helical membrane-spanning segments follow: residues 11 to 31 (ILGT…GGIF), 41 to 61 (ASAG…FFIA), 85 to 105 (GFGP…QIFG), 124 to 144 (YFAG…IWIF), 157 to 177 (FVNI…ILIT), 208 to 228 (STML…VISG), 239 to 259 (ATIL…LLPF), 289 to 309 (VLMN…WTIL), 336 to 356 (PSFS…LVYF), 364 to 384 (MLEI…LFLV), 415 to 435 (LWLI…LLAL), and 458 to 478 (EILK…LFSA).

The protein belongs to the amino acid-polyamine-organocation (APC) superfamily. Basic amino acid/polyamine antiporter (APA) (TC 2.A.3.2) family.

It is found in the cell inner membrane. Catalyzes the exchange of L-arginine for agmatine. The arginine uptake by the bacterium in the macrophage may be a virulence factor against the host innate immune response. The protein is Arginine/agmatine antiporter (aaxC) of Chlamydia trachomatis serovar A (strain ATCC VR-571B / DSM 19440 / HAR-13).